We begin with the raw amino-acid sequence, 406 residues long: tRNA-specific 2-thiouridylase MnmA (406 aa).

Residues 6-13 (AMSGGVDS) and leucine 32 contribute to the ATP site. Cysteine 101 functions as the Nucleophile in the catalytic mechanism. Cysteine 101 and cysteine 193 are disulfide-bonded. Glycine 125 serves as a coordination point for ATP. The interaction with tRNA stretch occupies residues 143–145 (KDQ). Cysteine 193 functions as the Cysteine persulfide intermediate in the catalytic mechanism. Positions 378–406 (GAPIEEQPAPGTVGAVDADAIEQGEDAQR) are disordered. Residues 396–406 (DAIEQGEDAQR) are compositionally biased toward acidic residues.

Belongs to the MnmA/TRMU family.

It is found in the cytoplasm. The enzyme catalyses S-sulfanyl-L-cysteinyl-[protein] + uridine(34) in tRNA + AH2 + ATP = 2-thiouridine(34) in tRNA + L-cysteinyl-[protein] + A + AMP + diphosphate + H(+). Functionally, catalyzes the 2-thiolation of uridine at the wobble position (U34) of tRNA, leading to the formation of s(2)U34. This chain is tRNA-specific 2-thiouridylase MnmA, found in Corynebacterium urealyticum (strain ATCC 43042 / DSM 7109).